Here is a 387-residue protein sequence, read N- to C-terminus: Cysteine desulfurase (387 aa).

Pyridoxal 5'-phosphate is bound by residues 72 to 73 (GT), Asn152, Gln180, and 200 to 202 (SAH). The residue at position 203 (Lys203) is an N6-(pyridoxal phosphate)lysine. Pyridoxal 5'-phosphate is bound at residue Thr238. The active-site Cysteine persulfide intermediate is Cys323. Cys323 is a binding site for [2Fe-2S] cluster.

This sequence belongs to the class-V pyridoxal-phosphate-dependent aminotransferase family. NifS/IscS subfamily. In terms of assembly, homodimer. Pyridoxal 5'-phosphate serves as cofactor.

The enzyme catalyses (sulfur carrier)-H + L-cysteine = (sulfur carrier)-SH + L-alanine. Its function is as follows. Catalyzes the removal of elemental sulfur atoms from cysteine to produce alanine. Seems to participate in the biosynthesis of the nitrogenase metalloclusters by providing the inorganic sulfur required for the Fe-S core formation. The polypeptide is Cysteine desulfurase (Cereibacter sphaeroides (Rhodobacter sphaeroides)).